We begin with the raw amino-acid sequence, 269 residues long: Ribosomal RNA small subunit methyltransferase J (269 aa).

Residues 125–126 and D179 each bind S-adenosyl-L-methionine; that span reads ER.

The protein belongs to the methyltransferase superfamily. RsmJ family.

Its subcellular location is the cytoplasm. The catalysed reaction is guanosine(1516) in 16S rRNA + S-adenosyl-L-methionine = N(2)-methylguanosine(1516) in 16S rRNA + S-adenosyl-L-homocysteine + H(+). In terms of biological role, specifically methylates the guanosine in position 1516 of 16S rRNA. In Pseudomonas syringae pv. syringae (strain B728a), this protein is Ribosomal RNA small subunit methyltransferase J.